Consider the following 639-residue polypeptide: Putative cyclic beta-1,2-glucan modification protein (639 aa).

6 consecutive transmembrane segments (helical) span residues 34–54 (ALFTLLIAIALVFTVEVIVRW), 69–89 (PAWTTVAVFFLAMLGVDALFG), 96–116 (LLIAPLAVVPAFISQQKQVFL), 144–164 (WTAVGVVAGLIAAIVVGALLL), 185–205 (FALPLLVAFWNIMDYNQFSWI), and 227–247 (FALAFAINLPMANVNAPAGYM).

It localises to the cell membrane. In Rhizobium meliloti (strain 1021) (Ensifer meliloti), this protein is Putative cyclic beta-1,2-glucan modification protein (cgmA).